The chain runs to 107 residues: Stellacyanin (107 aa).

The Phytocyanin domain maps to 1 to 105 (TVYTVGDSAG…GQKVHINVTV (105 aa)). N-linked (GlcNAc...) asparagine glycosylation is present at Asn28. His46 contributes to the Cu cation binding site. An intrachain disulfide couples Cys59 to Cys93. The N-linked (GlcNAc...) asparagine glycan is linked to Asn60. Residues Cys87, His92, and Gln97 each contribute to the Cu cation site. N-linked (GlcNAc...) asparagine glycosylation is present at Asn102.

In Toxicodendron vernicifluum (Japanese lacquer tree), this protein is Stellacyanin.